The chain runs to 346 residues: Partitioning defective 6 homolog alpha (346 aa).

An interaction with PRKCI and PRKCZ region spans residues 1–116; the sequence is MARPQRTPAR…SNSLQRRKKG (116 aa). The 81-residue stretch at 15–95 folds into the PB1 domain; sequence IVEVKSKFDA…PPLRLLVQKR (81 aa). Residues 126-253 are interaction with PARD3 and CDC42; it reads RTRPPLLISL…VTVKPANQRN (128 aa). The region spanning 133–150 is the Pseudo-CRIB domain; sequence ISLPQDFRQVSSVIDVDL. A PDZ domain is found at 157 to 250; sequence RVRLHKHGSD…NLIVTVKPAN (94 aa). Residues 257–346 form a disordered region; it reads RGASGRLTGP…IRGDGSGFSL (90 aa). Serine 278 and serine 345 each carry phosphoserine.

The protein belongs to the PAR6 family. As to quaternary structure, interacts with MAP2K5. Interacts with PARD3. Interacts with GTP-bound forms of CDC42, RHOQ/TC10 and RAC1. Interacts with the N-terminal part of PRKCI and PRKCZ. Part of a complex with PARD3, CDC42 or RAC1 and PRKCI or PRKCZ. Part of a complex with LLGL1 and PRKCI. Interacts with human T-cell leukemia virus type I TAX protein. Interacts with PALS1 and CRB3. Interacts with TGFBR1; involved in TGF-beta induced epithelial to mesenchymal transition. Interacts with ECT2 ('Thr-359' phosphorylated form) and PRKCI. Interacts with DCTN1 and PCM1. Post-translationally, phosphorylated by the TGF-beta receptor. Ubiquitinated by the SCF(FBXO31) complex, leading to its proteasomal degradation. As to expression, expressed in pancreas, skeletal muscle, brain and heart. Weakly expressed in kidney and placenta.

The protein localises to the cytoplasm. It is found in the cell membrane. Its subcellular location is the cell projection. The protein resides in the ruffle. It localises to the cell junction. The protein localises to the tight junction. It is found in the cytoskeleton. Its subcellular location is the microtubule organizing center. The protein resides in the centrosome. It localises to the centriolar satellite. In terms of biological role, adapter protein involved in asymmetrical cell division and cell polarization processes. Probably involved in the formation of epithelial tight junctions. Association with PARD3 may prevent the interaction of PARD3 with F11R/JAM1, thereby preventing tight junction assembly. The PARD6-PARD3 complex links GTP-bound Rho small GTPases to atypical protein kinase C proteins. Regulates centrosome organization and function. Essential for the centrosomal recruitment of key proteins that control centrosomal microtubule organization. This is Partitioning defective 6 homolog alpha (PARD6A) from Homo sapiens (Human).